Here is a 970-residue protein sequence, read N- to C-terminus: uncharacterized protein (970 aa).

Residues 12–32 (VIFFSVFFVIFFLFIESSVGF) form a helical membrane-spanning segment.

It to E.coli YtfN.

It is found in the membrane. This is an uncharacterized protein from Buchnera aphidicola subsp. Acyrthosiphon pisum (strain APS) (Acyrthosiphon pisum symbiotic bacterium).